The following is a 327-amino-acid chain: MVREKVKVSTRTLQWRCVESRRDSKRLYYGRFILSPLMKGQADTIGIAMRRALLGEIEGTCITRAKSENIPHDYSNIVGIQESVHEILMNLNEIVLRSNLYGTRNALICVQGPGYITARDIILPPSVEIVDNTQHIATVTESIDLCIGLKIERNRGYSLKMSNNFEDRSYPIDAVFMPVQNANHSIHSYGNGNGKQEILFLEIWTNGSLTPKEALHEASRNLINLFIPFLHVEEETFHLENNQHQVTLPLFPFHNRLVNLRKKKKELAFQYIFIDQLELPPRIYNCLKKSNIHTLLDLLNNSQEDLIKIEHFHIEDVKKILDILEKK.

Residues 1–233 are alpha N-terminal domain (alpha-NTD); that stretch reads MVREKVKVST…NLFIPFLHVE (233 aa). Residues 267 to 327 are alpha C-terminal domain (alpha-CTD); that stretch reads LAFQYIFIDQ…KKILDILEKK (61 aa).

This sequence belongs to the RNA polymerase alpha chain family. In terms of assembly, in plastids the minimal PEP RNA polymerase catalytic core is composed of four subunits: alpha, beta, beta', and beta''. When a (nuclear-encoded) sigma factor is associated with the core the holoenzyme is formed, which can initiate transcription.

The protein resides in the plastid. The protein localises to the chloroplast. It carries out the reaction RNA(n) + a ribonucleoside 5'-triphosphate = RNA(n+1) + diphosphate. In terms of biological role, DNA-dependent RNA polymerase catalyzes the transcription of DNA into RNA using the four ribonucleoside triphosphates as substrates. The polypeptide is DNA-directed RNA polymerase subunit alpha (Draba nemorosa (Woodland whitlowgrass)).